We begin with the raw amino-acid sequence, 846 residues long: DNA mismatch repair protein MutS (846 aa).

Residue 610-617 (GPNMGGKS) coordinates ATP.

The protein belongs to the DNA mismatch repair MutS family.

In terms of biological role, this protein is involved in the repair of mismatches in DNA. It is possible that it carries out the mismatch recognition step. This protein has a weak ATPase activity. This chain is DNA mismatch repair protein MutS, found in Legionella pneumophila (strain Paris).